A 99-amino-acid polypeptide reads, in one-letter code: Malonate decarboxylase acyl carrier protein (99 aa).

An O-(phosphoribosyl dephospho-coenzyme A)serine modification is found at Ser-25.

It belongs to the MdcC family. Post-translationally, covalently binds the prosthetic group of malonate decarboxylase.

It localises to the cytoplasm. In terms of biological role, subunit of malonate decarboxylase, it is an acyl carrier protein to which acetyl and malonyl thioester residues are bound via a 2'-(5''-phosphoribosyl)-3'-dephospho-CoA prosthetic group and turn over during the catalytic mechanism. This Pseudomonas fluorescens (strain SBW25) protein is Malonate decarboxylase acyl carrier protein.